The following is a 175-amino-acid chain: Large ribosomal subunit protein uL16 (175 aa).

The protein belongs to the universal ribosomal protein uL16 family.

The polypeptide is Large ribosomal subunit protein uL16 (Metallosphaera sedula (strain ATCC 51363 / DSM 5348 / JCM 9185 / NBRC 15509 / TH2)).